Here is a 314-residue protein sequence, read N- to C-terminus: Olfactory receptor 10A6 (314 aa).

Topologically, residues 1 to 25 are extracellular; the sequence is MERQNQSCVVEFILLGFSNYPELQG. An N-linked (GlcNAc...) asparagine glycan is attached at Asn5. Residues 26 to 46 form a helical membrane-spanning segment; it reads QLFVAFLVIYLVTLIGNAIII. Topologically, residues 47–54 are cytoplasmic; sequence VIVSLDQS. A helical membrane pass occupies residues 55–75; that stretch reads LHVPMYLFLLNLSVVDLSFSA. Residues 76–99 are Extracellular-facing; it reads VIMPEMLVVLSTEKTTISFGGCFA. Cys97 and Cys189 are joined by a disulfide. A helical membrane pass occupies residues 100-120; it reads QMYFILLFGGAECFLLGAMAY. At 121–139 the chain is on the cytoplasmic side; it reads DRFAAICHPLNYQMIMNKG. The chain crosses the membrane as a helical span at residues 140–160; the sequence is VFMKLIIFSWALGFMLGTVQT. Residues 161 to 197 are Extracellular-facing; sequence SWVSSFPFCGLNEINHISCETPAVLELACADTFLFEI. Residues 198–217 form a helical membrane-spanning segment; it reads YAFTGTFLIILVPFLLILLS. The Cytoplasmic portion of the chain corresponds to 218 to 237; sequence YIRVLFAILKMPSTTGRQKA. The chain crosses the membrane as a helical span at residues 238–258; sequence FSTCAAHLTSVTLFYGTASMT. Topologically, residues 259 to 271 are extracellular; sequence YLQPKSGYSPETK. A helical membrane pass occupies residues 272-292; the sequence is KVMSLSYSLLTPLLNLLIYSL. Residues 293–314 are Cytoplasmic-facing; it reads RNSEMKRALMKLWRRRVVLHTI.

The protein belongs to the G-protein coupled receptor 1 family.

Its subcellular location is the cell membrane. In terms of biological role, odorant receptor. This chain is Olfactory receptor 10A6 (OR10A6), found in Homo sapiens (Human).